Consider the following 542-residue polypeptide: MARYVFITGGVVSSLGKGIAAAALAALLQARGYSVRLRKLDPYLNVDPGTMSPYQHGEVFVTDDGAETDLDLGHYERFTGRSANSQDNITTGRIYRNIIERERRGDYLGATVQVIPHVTDEIKRFITTGNEEFDFVLCEIGGTVGDIEAMPFLEAIRQLHNELPRQNVIYVHLTLMPYISSAGELKTKPTQHSVKELQSVGIAPDILLVRADRPIPETERSKLSLFCNVRPTAVIQALDMPTIYDVPIAYHKEGLDSEVLSAFGMHPAHKPNMDRWEDITHRIHHPEGEVTIAVVGKYTGLKDAYKSLTEAIAHGGLANKVKVNIEWIDAELFEREDPTSTLRKVHGILVPGAFGVRGAEGKMRAIQFARERRVPFFGICFGMQLACIEAARNIAQIENASSSEFCETKNPIVGLMTEWLKGDVLEKRTKCGNFGGTMRLGAFAAELKENSHIAQIYGMTRIYERHRHRYEVNIDYKDKLEQCGLVFSGMSPDGVLPETIEYADHPWFIGVQYHPELKSRPFDPHPLFSSFIEATVEQSRLV.

The interval 1–265 (MARYVFITGG…DSEVLSAFGM (265 aa)) is amidoligase domain. Residue serine 13 coordinates CTP. Serine 13 lines the UTP pocket. 14–19 (SLGKGI) contributes to the ATP binding site. Tyrosine 54 is a binding site for L-glutamine. Aspartate 71 provides a ligand contact to ATP. Positions 71 and 139 each coordinate Mg(2+). CTP is bound by residues 146–148 (DIE), 186–191 (KTKPTQ), and lysine 222. Residues 186-191 (KTKPTQ) and lysine 222 contribute to the UTP site. A Glutamine amidotransferase type-1 domain is found at 291–541 (TIAVVGKYTG…IEATVEQSRL (251 aa)). Alanine 353 contributes to the L-glutamine binding site. The Nucleophile; for glutamine hydrolysis role is filled by cysteine 380. Residues 381 to 384 (FGMQ), glutamate 404, and arginine 469 each bind L-glutamine. Active-site residues include histidine 514 and glutamate 516.

Belongs to the CTP synthase family. In terms of assembly, homotetramer.

It carries out the reaction UTP + L-glutamine + ATP + H2O = CTP + L-glutamate + ADP + phosphate + 2 H(+). It catalyses the reaction L-glutamine + H2O = L-glutamate + NH4(+). The enzyme catalyses UTP + NH4(+) + ATP = CTP + ADP + phosphate + 2 H(+). It participates in pyrimidine metabolism; CTP biosynthesis via de novo pathway; CTP from UDP: step 2/2. Its activity is regulated as follows. Allosterically activated by GTP, when glutamine is the substrate; GTP has no effect on the reaction when ammonia is the substrate. The allosteric effector GTP functions by stabilizing the protein conformation that binds the tetrahedral intermediate(s) formed during glutamine hydrolysis. Inhibited by the product CTP, via allosteric rather than competitive inhibition. Catalyzes the ATP-dependent amination of UTP to CTP with either L-glutamine or ammonia as the source of nitrogen. Regulates intracellular CTP levels through interactions with the four ribonucleotide triphosphates. The protein is CTP synthase of Bartonella henselae (strain ATCC 49882 / DSM 28221 / CCUG 30454 / Houston 1) (Rochalimaea henselae).